Here is a 539-residue protein sequence, read N- to C-terminus: Alpha-aminoadipic semialdehyde dehydrogenase (539 aa).

The N-terminal 26 residues, 1 to 26 (MLRLARPLCVQTVKASKLSRLWSRPA), are a transit peptide targeting the mitochondrion. K86, K94, and K97 each carry N6-acetyllysine; alternate. K86, K94, and K97 each carry N6-succinyllysine; alternate. NAD(+) contacts are provided by residues 192–194 (TAF), K218, 258–259 (GT), 274–275 (GS), 274–279 (GSTQVG), and 296–297 (EL). E296 (proton acceptor) is an active-site residue. The Nucleophile role is filled by C330. T331 provides a ligand contact to (S)-2-amino-6-oxohexanoate. E427 lines the NAD(+) pocket. An N6-acetyllysine modification is found at K462. (S)-2-amino-6-oxohexanoate is bound by residues G489 and A490. N6-acetyllysine is present on K500. Position 537 is an N6-succinyllysine (K537).

This sequence belongs to the aldehyde dehydrogenase family. Homotetramer. As to expression, abundant in kidney, liver, cochlea and outer hair cells but not inner hair cells or vestibular type I hair cells. Very low levels in lung, brain, intestine and pancreas.

The protein localises to the cytoplasm. Its subcellular location is the cytosol. The protein resides in the nucleus. It localises to the mitochondrion. It carries out the reaction nonanal + NAD(+) + H2O = nonanoate + NADH + 2 H(+). The catalysed reaction is (S)-2-amino-6-oxohexanoate + NAD(+) + H2O = L-2-aminoadipate + NADH + 2 H(+). The enzyme catalyses betaine aldehyde + NAD(+) + H2O = glycine betaine + NADH + 2 H(+). It catalyses the reaction an aldehyde + NAD(+) + H2O = a carboxylate + NADH + 2 H(+). It carries out the reaction hexanal + NAD(+) + H2O = hexanoate + NADH + 2 H(+). The catalysed reaction is octanal + NAD(+) + H2O = octanoate + NADH + 2 H(+). The enzyme catalyses (E)-non-2-enal + NAD(+) + H2O = (E)-non-2-enoate + NADH + 2 H(+). It catalyses the reaction (E)-4-hydroxynon-2-enal + NAD(+) + H2O = (E)-4-hydroxynon-2-enoate + NADH + 2 H(+). It participates in amine and polyamine biosynthesis; betaine biosynthesis via choline pathway; betaine from betaine aldehyde: step 1/1. Its function is as follows. Multifunctional enzyme mediating important protective effects. Metabolizes betaine aldehyde to betaine, an important cellular osmolyte and methyl donor. Protects cells from oxidative stress by metabolizing a number of lipid peroxidation-derived aldehydes. Involved in lysine catabolism. In Rattus norvegicus (Rat), this protein is Alpha-aminoadipic semialdehyde dehydrogenase.